A 116-amino-acid polypeptide reads, in one-letter code: Ribosome-binding factor A (116 aa).

It belongs to the RbfA family. Monomer. Binds 30S ribosomal subunits, but not 50S ribosomal subunits or 70S ribosomes.

It is found in the cytoplasm. Its function is as follows. One of several proteins that assist in the late maturation steps of the functional core of the 30S ribosomal subunit. Associates with free 30S ribosomal subunits (but not with 30S subunits that are part of 70S ribosomes or polysomes). Required for efficient processing of 16S rRNA. May interact with the 5'-terminal helix region of 16S rRNA. In Levilactobacillus brevis (strain ATCC 367 / BCRC 12310 / CIP 105137 / JCM 1170 / LMG 11437 / NCIMB 947 / NCTC 947) (Lactobacillus brevis), this protein is Ribosome-binding factor A.